A 159-amino-acid chain; its full sequence is MIDPDGFRPNVGIILTNDAGQVLWARRINQDAWQFPQGGINPDETPEDALYRELNEEVGLERDDVEILACTRGWLRYRLPQRLVRTHSQPLCIGQKQKWFLLRLVSNEQRVRMDLTGKPEFDGWRWVSYWYPLGQVVTFKREVYRRALKELAPRLLTRD.

In terms of domain architecture, Nudix hydrolase spans 6 to 149 (GFRPNVGIIL…KREVYRRALK (144 aa)). A Nudix box motif is present at residues 38–59 (GGINPDETPEDALYRELNEEVG).

The protein belongs to the Nudix hydrolase family. RppH subfamily. A divalent metal cation is required as a cofactor.

Functionally, accelerates the degradation of transcripts by removing pyrophosphate from the 5'-end of triphosphorylated RNA, leading to a more labile monophosphorylated state that can stimulate subsequent ribonuclease cleavage. This is RNA pyrophosphohydrolase from Pseudomonas entomophila (strain L48).